A 365-amino-acid chain; its full sequence is Putative fatty acid elongase 2 (365 aa).

The Lumenal segment spans residues 1 to 68 (MPDSPTLHHN…SFEFIVNKTR (68 aa)). Residues Asn17 and Asn65 are each glycosylated (N-linked (GlcNAc...) asparagine). The chain crosses the membrane as a helical span at residues 69–89 (FSSAPVVATIIISYYLLILVG). The Cytoplasmic segment spans residues 90 to 111 (GRIMRNRQPIRLQKIFQYYNLT). Residues 112–132 (FSIASAILALLIFEQVAPAIY) traverse the membrane as a helical segment. Residues 133–149 (KHGFFFSICNEKAWTQP) are Lumenal-facing. A helical transmembrane segment spans residues 150–170 (LVFLYYCAYISKFLELTDTFF). Topologically, residues 171 to 179 (LVLRKKPLQ) are cytoplasmic. A helical membrane pass occupies residues 180–198 (FLHCYHHGATAVLVYTQIV). The Lumenal portion of the chain corresponds to 199–204 (GRTSIS). A helical membrane pass occupies residues 205–225 (WLIIEINLLVHVTMYYYYYLV). Residues 226-241 (AKGIRVPWKKWVTRFQ) are Cytoplasmic-facing. The chain crosses the membrane as a helical span at residues 242–262 (IVQFFADLGFIYFAVYTEVAY). The Lumenal segment spans residues 263–278 (RLKFYKACMGHCSGHP). A helical transmembrane segment spans residues 279–299 (LAAFCGLATISSYLVLFIVFY). The Cytoplasmic portion of the chain corresponds to 300–365 (HNTYKKNAAL…PISSGLNNEK (66 aa)).

The protein belongs to the ELO family.

It localises to the endoplasmic reticulum membrane. The enzyme catalyses a very-long-chain acyl-CoA + malonyl-CoA + H(+) = a very-long-chain 3-oxoacyl-CoA + CO2 + CoA. Its function is as follows. May be involved in the synthesis of very long chain fatty acids. This chain is Putative fatty acid elongase 2, found in Schizosaccharomyces pombe (strain 972 / ATCC 24843) (Fission yeast).